The sequence spans 265 residues: Uridylate kinase (265 aa).

The disordered stretch occupies residues Met1 to Ser29. Lys40–Gly43 lines the ATP pocket. UMP is bound at residue Gly81. Positions 82 and 86 each coordinate ATP. Residues Asp101 and Met162–Thr169 each bind UMP. The ATP site is built by Phe195 and Asp198.

It belongs to the UMP kinase family. Homohexamer.

It is found in the cytoplasm. It catalyses the reaction UMP + ATP = UDP + ADP. Its pathway is pyrimidine metabolism; CTP biosynthesis via de novo pathway; UDP from UMP (UMPK route): step 1/1. With respect to regulation, inhibited by UTP. Its function is as follows. Catalyzes the reversible phosphorylation of UMP to UDP. In Mycobacterium avium (strain 104), this protein is Uridylate kinase.